A 1135-amino-acid polypeptide reads, in one-letter code: Envelopment polyprotein (1135 aa).

The first 35 residues, 1–35, serve as a signal peptide directing secretion; the sequence is MRILKLLELVVKVSLFTIALSSVLLAFLIFRATDA. Topologically, residues 36–314 are lumenal; the sequence is KVEIIRGDHP…KYSKSIYKQT (279 aa). The short motif at 41–43 is the Cell attachment site element; that stretch reads RGD. Intrachain disulfides connect cysteine 114/cysteine 145 and cysteine 122/cysteine 156. An N-linked (GlcNAc...) asparagine; by host glycan is attached at asparagine 116. Residues 177–195 are non-covalent dimerization; that stretch reads LDNKRHFSVGTKFFISESL. Asparagine 210 carries an N-linked (GlcNAc...) asparagine; by host glycan. Residues cysteine 224 and cysteine 285 are joined by a disulfide bond. A helical transmembrane segment spans residues 315 to 366; sequence ACINFSWIRLILIALLIYFPIRWLVNKTTKPLFLWYDLIGLITYPILLLINC. Over 367–484 the chain is Cytoplasmic; the sequence is LWKYFPFKCS…VPGCPFLVTS (118 aa). A signal for signal peptide peptidase region spans residues 437 to 484; that stretch reads LSFSLLKFVTEILIGLIILSQMPMSMAQTTQCLSGCFYVPGCPFLVTS. Residues 485 to 1067 are Lumenal-facing; sequence KFEKCPERDQ…YFGSFFDTIR (583 aa). N-linked (GlcNAc...) asparagine; by host glycans are attached at residues asparagine 588, asparagine 605, and asparagine 980. Residues 1068-1088 form a helical membrane-spanning segment; the sequence is VILLIAFIFLVIYFCSILTTI. Residues 1089–1135 lie on the Cytoplasmic side of the membrane; it reads CKGYVKNESYKSRSKIEDDDDSEIKAPMLMKDTMTRRRPPMDFSHLV.

This sequence belongs to the tospovirus envelope glycoprotein family. In terms of assembly, homodimer; disulfide-linked. Heterodimer with Glycoprotein C. Interacts with nucleoprotein. Heterodimer with Glycoprotein N. Interacts with nucleoprotein. Specific enzymatic cleavages in vivo yield mature proteins including Glycoprotein N and Glycoprotein C. Post-translationally, glycosylated with O-linked glycans. Glycosylation is essential for proper subcellular location. In terms of processing, cleaved at acidic pH.

The protein resides in the virion membrane. Its subcellular location is the host Golgi apparatus membrane. The protein localises to the host endoplasmic reticulum membrane. Its function is as follows. Forms the spikes present at the surface of the virion together with Glycoprotein C. They are able to attach the virion to a cell receptor and to promote fusion of membranes after endocytosis of the virion. Plays a role in virus binding and/or entry into the vector midgut. Functionally, forms the spikes present at the surface of the virion together with Glycoprotein N. They are able to attach the virion to a cell receptor and to promote fusion of membranes after endocytosis of the virion. Probable class II fusion protein. The protein is Envelopment polyprotein (GP) of Tomato spotted wilt virus (strain Regular2A) (TSWV).